Consider the following 219-residue polypeptide: Large ribosomal subunit protein uL4 (219 aa).

Residues 43–100 are disordered; the sequence is AAKRQGTHSTKTRGEVSGGGKKPYRQKGTGRARQGSTRAPQFTGGGTVHGPQPRDYSQ.

This sequence belongs to the universal ribosomal protein uL4 family. In terms of assembly, part of the 50S ribosomal subunit.

One of the primary rRNA binding proteins, this protein initially binds near the 5'-end of the 23S rRNA. It is important during the early stages of 50S assembly. It makes multiple contacts with different domains of the 23S rRNA in the assembled 50S subunit and ribosome. Functionally, forms part of the polypeptide exit tunnel. This Mycobacterium sp. (strain JLS) protein is Large ribosomal subunit protein uL4.